The primary structure comprises 179 residues: Large ribosomal subunit protein eL18 (179 aa).

This sequence belongs to the eukaryotic ribosomal protein eL18 family. As to quaternary structure, component of the large ribosomal subunit.

It localises to the cytoplasm. It is found in the cytosol. Its subcellular location is the rough endoplasmic reticulum. Component of the large ribosomal subunit. The ribosome is a large ribonucleoprotein complex responsible for the synthesis of proteins in the cell. The polypeptide is Large ribosomal subunit protein eL18 (rpl18) (Salmo salar (Atlantic salmon)).